A 481-amino-acid polypeptide reads, in one-letter code: MNSFLMHWTYAIPEIWVLTMACVVLLADLFWGDGLRDLAAVLTVLTLSGAAVLTVFEMGQSGTAFAGLFVLDRFTNVAELFSYLAVLMVVLYSRRYLVDRGIYRGEVFVLLLFALLGIMVMVSGGSLLSVYLGLELLALSQYALVAFYRDSVMATEAGLKYFVLGALASGLLLYGMSLLYGLTGTLDVRDIAADLVNMTAGNLVLVFAIVFIAAGIAFKLGAAPFHMWLPDVYQGAPTVVTAFLASAPKIGAFALIIRLLVDGGYGMQESWQQIFVALTVVSLVVGNVIAIAQQNIKRMLAYSTIGHVGFMLLGIVAGTEAGLASAFFYTVVYTLMSLAGFGMILLVSRAGFEAERIDDFKGLAQRKPWYAFLMMIVMFSMAGVPPTVGFYAKLAVFQAVVAAGYVWLAVVGVLLAVIGAFYYLRVVKVMYFDKPAPDAGLIVRDDLASMALSINSLALLVLGILPGPLMAFCFYAMRGVI.

Transmembrane regions (helical) follow at residues 11 to 31, 38 to 58, 69 to 89, 107 to 127, 128 to 148, 162 to 182, 203 to 223, 237 to 257, 271 to 291, 299 to 319, 327 to 347, 370 to 390, 401 to 421, and 457 to 477; these read AIPE…DLFW, LAAV…VFEM, FVLD…VLMV, VFVL…GGSL, LSVY…VAFY, FVLG…LYGL, LVLV…LGAA, PTVV…ALII, WQQI…VIAI, MLAY…VAGT, FFYT…ILLV, YAFL…TVGF, VAAG…IGAF, and LALL…FYAM.

It belongs to the complex I subunit 2 family. NDH-1 is composed of 14 different subunits. Subunits NuoA, H, J, K, L, M, N constitute the membrane sector of the complex.

The protein resides in the cell inner membrane. It carries out the reaction a quinone + NADH + 5 H(+)(in) = a quinol + NAD(+) + 4 H(+)(out). In terms of biological role, NDH-1 shuttles electrons from NADH, via FMN and iron-sulfur (Fe-S) centers, to quinones in the respiratory chain. The immediate electron acceptor for the enzyme in this species is believed to be ubiquinone. Couples the redox reaction to proton translocation (for every two electrons transferred, four hydrogen ions are translocated across the cytoplasmic membrane), and thus conserves the redox energy in a proton gradient. In Acidithiobacillus ferrooxidans (strain ATCC 23270 / DSM 14882 / CIP 104768 / NCIMB 8455) (Ferrobacillus ferrooxidans (strain ATCC 23270)), this protein is NADH-quinone oxidoreductase subunit N.